Here is a 582-residue protein sequence, read N- to C-terminus: MDGSRRVRATSVLPRYSPPCLFTGHLSTKSNAFCTDSSSLRLSTLQLVKNHMAIHYNKILSAKAAVDCSIPVSVNTSIKYADQQRREKLRKELARCEKEFKLSKSAMQTNSKMNSKFFVNSLQKPSGEPQDQDVFIEEMTRYPSFSKSLIPSSEGLHLSLPESSKMLMSGTQKHASTSPSRHSGCGHGCDRRPRSAHQFQVALAKTPSGDLLEKHSDLFSNKQSPFTPRTLKTEAKSFLSQYRYYTPAKRRKDFSDQRMEAETQTELSSFNSELGTAEKTSSKDSEVNINQVPNYTRNGAEDKIAPLPSQGQNLAWDSIQDGILQQSSERASCKLSTEFSPDSKIYSDEEELLYLSFMENVTDEILKLGLFSNRFLERLFERHIKKNKHHLEEGKMRYLLHGLKVDLGCISEEDPAKQKHFRMLNQLHFQKALISRENEFVSDEETVSHHERQQYQEALDMLSAVPKDENKMFSLPGEFLIPAHKVKHSEGVIIQQVNDETDNEASPWNENNPSVSDSVIDQETSVDVIEGDSDFERAETSRELCCLSTSLSPSGPFPSINGGSNHGKELSTLRIMGMSIED.

Disordered regions lie at residues 167-192 (LMSG…CDRR) and 251-289 (RKDF…EVNI). Polar residues-rich tracts occupy residues 169–181 (SGTQ…SPSR) and 262–274 (ETQT…NSEL).

As to quaternary structure, found in a complex with CFAP410, NEK1 and SPATA7. Interacts with NEK1. Interacts with RPGRIP1. Interacts with RPGR. Interacts with NPHP4. Interacts with NPHP1. Interacts with AHI1. As to expression, expressed in the retina (at protein level). Expressed in the choroid region and retinal pigment endothelium, within the photoreceptor layer (at protein level).

Its subcellular location is the cytoplasm. It localises to the cytoskeleton. The protein resides in the cilium axoneme. The protein localises to the cilium basal body. It is found in the cell projection. Its subcellular location is the cilium. It localises to the photoreceptor outer segment. Its function is as follows. Involved in the maintenance of both rod and cone photoreceptor cells. Required for photoreceptor-specific localization of proximal connecting cilium (CC) proteins RPGR, AHI1, NPHP1, NPHP4, and RPGRIP1 at the distal CC, a photoreceptor-specific extension of the primary cilium transition zone. Maintenance of protein localization at the photoreceptor-specific distal CC is essential for normal microtubule stability and to prevent photoreceptor degeneration. The polypeptide is Spermatogenesis-associated protein 7 homolog (Spata7) (Mus musculus (Mouse)).